The chain runs to 212 residues: Ribonuclease HII (212 aa).

Positions 1 to 206 (MICGVDEAGK…VKNLLHQKNQ (206 aa)) constitute an RNase H type-2 domain. 3 residues coordinate a divalent metal cation: Asp6, Glu7, and Asp101.

Belongs to the RNase HII family. Requires Mn(2+) as cofactor. Mg(2+) is required as a cofactor.

Its subcellular location is the cytoplasm. The enzyme catalyses Endonucleolytic cleavage to 5'-phosphomonoester.. In terms of biological role, endonuclease that specifically degrades the RNA of RNA-DNA hybrids. The polypeptide is Ribonuclease HII (Methanospirillum hungatei JF-1 (strain ATCC 27890 / DSM 864 / NBRC 100397 / JF-1)).